Here is a 123-residue protein sequence, read N- to C-terminus: Small ribosomal subunit protein uS12c (123 aa).

Belongs to the universal ribosomal protein uS12 family. In terms of assembly, part of the 30S ribosomal subunit.

The protein localises to the plastid. The protein resides in the chloroplast. Functionally, with S4 and S5 plays an important role in translational accuracy. Located at the interface of the 30S and 50S subunits. The chain is Small ribosomal subunit protein uS12c (rps12) from Huperzia lucidula (Shining clubmoss).